A 277-amino-acid polypeptide reads, in one-letter code: 4-deoxy-L-threo-5-hexosulose-uronate ketol-isomerase (277 aa).

The Zn(2+) site is built by histidine 195, histidine 197, glutamate 202, and histidine 244.

It belongs to the KduI family. Requires Zn(2+) as cofactor.

It catalyses the reaction 5-dehydro-4-deoxy-D-glucuronate = 3-deoxy-D-glycero-2,5-hexodiulosonate. It functions in the pathway glycan metabolism; pectin degradation; 2-dehydro-3-deoxy-D-gluconate from pectin: step 4/5. Catalyzes the isomerization of 5-dehydro-4-deoxy-D-glucuronate to 3-deoxy-D-glycero-2,5-hexodiulosonate. The sequence is that of 4-deoxy-L-threo-5-hexosulose-uronate ketol-isomerase from Oceanobacillus iheyensis (strain DSM 14371 / CIP 107618 / JCM 11309 / KCTC 3954 / HTE831).